Reading from the N-terminus, the 317-residue chain is Sulfate adenylyltransferase subunit 2 (317 aa).

2 disordered regions span residues 1–21 (MPDSRPDTELSNPQSAKAPLD) and 298–317 (RAIDRDQSGSMEKKKREGYF).

This sequence belongs to the PAPS reductase family. CysD subfamily. Heterodimer composed of CysD, the smaller subunit, and CysN.

It carries out the reaction sulfate + ATP + H(+) = adenosine 5'-phosphosulfate + diphosphate. It participates in sulfur metabolism; hydrogen sulfide biosynthesis; sulfite from sulfate: step 1/3. In terms of biological role, with CysN forms the ATP sulfurylase (ATPS) that catalyzes the adenylation of sulfate producing adenosine 5'-phosphosulfate (APS) and diphosphate, the first enzymatic step in sulfur assimilation pathway. APS synthesis involves the formation of a high-energy phosphoric-sulfuric acid anhydride bond driven by GTP hydrolysis by CysN coupled to ATP hydrolysis by CysD. The protein is Sulfate adenylyltransferase subunit 2 of Rhizobium etli (strain CIAT 652).